The primary structure comprises 179 residues: Large ribosomal subunit protein uL5 (179 aa).

The protein belongs to the universal ribosomal protein uL5 family. As to quaternary structure, part of the 50S ribosomal subunit; part of the 5S rRNA/L5/L18/L25 subcomplex. Contacts the 5S rRNA and the P site tRNA. Forms a bridge to the 30S subunit in the 70S ribosome.

In terms of biological role, this is one of the proteins that bind and probably mediate the attachment of the 5S RNA into the large ribosomal subunit, where it forms part of the central protuberance. In the 70S ribosome it contacts protein S13 of the 30S subunit (bridge B1b), connecting the 2 subunits; this bridge is implicated in subunit movement. Contacts the P site tRNA; the 5S rRNA and some of its associated proteins might help stabilize positioning of ribosome-bound tRNAs. The polypeptide is Large ribosomal subunit protein uL5 (Dictyoglomus turgidum (strain DSM 6724 / Z-1310)).